Here is a 500-residue protein sequence, read N- to C-terminus: 4-aminobutyrate aminotransferase, mitochondrial (500 aa).

The transit peptide at 1–28 (MASMLLAQRLACSFQHSYRLLVPGSRHI) directs the protein to the mitochondrion. Cysteine 163 is a binding site for [2Fe-2S] cluster. 164–165 (GS) serves as a coordination point for pyridoxal 5'-phosphate. Cysteine 166 is a [2Fe-2S] cluster binding site. Arginine 220 serves as a coordination point for substrate. N6-succinyllysine is present on lysine 231. At lysine 252 the chain carries N6-acetyllysine; alternate. Lysine 252 bears the N6-succinyllysine; alternate mark. Lysine 279 and lysine 318 each carry N6-acetyllysine. Position 357 is an N6-(pyridoxal phosphate)lysine (lysine 357). Threonine 381 contacts pyridoxal 5'-phosphate. Lysine 413 is modified (N6-acetyllysine; alternate). Lysine 413 carries the post-translational modification N6-succinyllysine; alternate. Lysine 452 and lysine 470 each carry N6-acetyllysine.

Belongs to the class-III pyridoxal-phosphate-dependent aminotransferase family. As to quaternary structure, homodimer; disulfide-linked. It depends on pyridoxal 5'-phosphate as a cofactor. The cofactor is [2Fe-2S] cluster. In terms of tissue distribution, liver &gt; pancreas &gt; brain &gt; kidney &gt; heart &gt; placenta.

It localises to the mitochondrion matrix. It carries out the reaction 4-aminobutanoate + 2-oxoglutarate = succinate semialdehyde + L-glutamate. The enzyme catalyses (S)-3-amino-2-methylpropanoate + 2-oxoglutarate = 2-methyl-3-oxopropanoate + L-glutamate. Catalyzes the conversion of gamma-aminobutyrate and L-beta-aminoisobutyrate to succinate semialdehyde and methylmalonate semialdehyde, respectively. Can also convert delta-aminovalerate and beta-alanine. This is 4-aminobutyrate aminotransferase, mitochondrial from Homo sapiens (Human).